A 687-amino-acid polypeptide reads, in one-letter code: Chloride channel protein ClC-Ka (687 aa).

5 helical membrane-spanning segments follow: residues 52–72 (FLVA…FAIG), 94–114 (LSWT…SQSI), 161–181 (IFLG…AYLG), 204–224 (AAAV…LFSI), and 236–256 (YWRG…LGVF). Positions 259, 261, 278, and 281 each coordinate Ca(2+). The next 6 membrane-spanning stretches (helical) occupy residues 282-302 (IFFF…YLFC), 325-345 (PSYA…PGVG), 396-416 (FTIF…LILA), 417-437 (TTIP…AAIG), 458-478 (VNPI…SGAV), and 486-506 (LLAF…MAVL). Residues 507-687 (AANAISQNCQ…STLINPPAPK (181 aa)) lie on the Cytoplasmic side of the membrane. 2 consecutive CBS domains span residues 551–609 (MNCN…QPAS) and 626–687 (CPTQ…PAPK).

It belongs to the chloride channel (TC 2.A.49) family. CLCNKA subfamily. Homodimer. Interacts with BSND. As to expression, expressed predominantly in the kidney. Expressed strongly in the cortical thick ascending limb and the distal convoluted tubule, with minor expression in the S3 segment of the proximal tubule and the cortical collecting tubule.

The protein resides in the basolateral cell membrane. The enzyme catalyses chloride(in) = chloride(out). It catalyses the reaction bromide(in) = bromide(out). It carries out the reaction nitrate(in) = nitrate(out). The catalysed reaction is iodide(out) = iodide(in). With respect to regulation, activated by extracellular Ca(2+) and inhibited by extracellular acidic pH. In terms of biological role, anion-selective channel permeable to small monovalent anions with ion selectivity for chloride &gt; bromide &gt; nitrate &gt; iodide. Forms a homodimeric channel where each subunit has its own ion conduction pathway. Conducts double-barreled currents controlled by two types of gates, two fast gates that control each subunit independently and a slow common gate that opens and shuts off both subunits simultaneously. Assembles with the regulatory subunit BSND/Barttin for sorting at the basolateral plasma membrane domain. CLCNKA:BSND channels are activated upon membrane hyperpolarization mostly controlled by fast gating. Mediates transepithelial chloride transport from the lumen to interstitial compartment along the thin ascending limb of Henle's loop, contributing to generation of hypertonic medullary interstitium as a countercurrent system to achieve urine concentration. Conducts chloride currents in the stria vascularis of the inner ear to establish the endocochlear potential necessary for normal hearing. In Rattus norvegicus (Rat), this protein is Chloride channel protein ClC-Ka.